Consider the following 693-residue polypeptide: Zinc finger protein 441 (693 aa).

The region spanning 4 to 79 is the KRAB domain; it reads VAFEDVAINF…ERACEIKDNS (76 aa). The segment at 169–190 adopts a C2H2-type 1 zinc-finger fold; sequence YDCKECASFSSLENLQRHMAAH. A C2H2-type 2; degenerate zinc finger spans residues 196 to 218; the sequence is RICKLCGNAFIWPSLFHMLRRTH. The C2H2-type 3; degenerate zinc finger occupies 224-246; that stretch reads YEYEQCSTAFPAYSSTLRHERTH. The segment at 252-274 adopts a C2H2-type 4; degenerate zinc-finger fold; it reads YQCKQCGKAFSCSCYTQLYERTH. 15 C2H2-type zinc fingers span residues 280–302, 308–330, 336–358, 364–386, 392–413, 419–441, 447–469, 475–497, 503–525, 531–553, 559–581, 587–609, 615–637, 643–665, and 671–693; these read YECKQCGKAFYHLGSFQRHMIVH, HKCKICGKGFLSPSSVRRHKRTH, YECKYCGKAFSDCTGFRRHMITH, HKCKVCGKAFDSPSLCRRHETTH, YKCECGKAFSDFYYFRNHETTH, YKCKQCGKAFICCTYLQIHERIH, YKCKQCGKAFRSSNYIRVHEKTH, YECKQCGKALSHLKSFQRHMIMH, HKCKICGKSFDSPSSFRRHERIH, YKCKLCGKGFRSSSYIQLHERTH, YGCQQCGKALSDLSSFRRHMITH, HKCKICGKGFDYPSSVQRHERTH, YECKECGKAFSHSSYLRIHERVH, YKCKECGKPFHCPSAFHKHERTH, and YKCKECGEAFHCISSFHKHEMTH.

The protein belongs to the krueppel C2H2-type zinc-finger protein family.

The protein resides in the nucleus. May be involved in transcriptional regulation. In Homo sapiens (Human), this protein is Zinc finger protein 441 (ZNF441).